A 134-amino-acid chain; its full sequence is Arsenate reductase (134 aa).

Catalysis depends on nucleophile residues cysteine 11, cysteine 83, and cysteine 90. 2 disulfide bridges follow: cysteine 11-cysteine 83 and cysteine 83-cysteine 90.

It belongs to the low molecular weight phosphotyrosine protein phosphatase family. Thioredoxin-coupled ArsC subfamily.

Its subcellular location is the cytoplasm. The catalysed reaction is arsenate + [thioredoxin]-dithiol + H(+) = arsenite + [thioredoxin]-disulfide + H2O. Functionally, catalyzes the reduction of arsenate [As(V)] to arsenite [As(III)]. The chain is Arsenate reductase from Bacillus cereus (strain ATCC 14579 / DSM 31 / CCUG 7414 / JCM 2152 / NBRC 15305 / NCIMB 9373 / NCTC 2599 / NRRL B-3711).